The following is a 222-amino-acid chain: Ribonuclease HII (222 aa).

The RNase H type-2 domain maps to 32 to 222 (FHIAGVDEVG…LIKRYKEDIS (191 aa)). The a divalent metal cation site is built by aspartate 38, glutamate 39, and aspartate 130.

This sequence belongs to the RNase HII family. It depends on Mn(2+) as a cofactor. Requires Mg(2+) as cofactor.

It is found in the cytoplasm. It catalyses the reaction Endonucleolytic cleavage to 5'-phosphomonoester.. Functionally, endonuclease that specifically degrades the RNA of RNA-DNA hybrids. This chain is Ribonuclease HII, found in Bartonella bacilliformis (strain ATCC 35685 / KC583 / Herrer 020/F12,63).